The primary structure comprises 145 residues: Large ribosomal subunit protein uL15 (145 aa).

Positions 1–58 (MKLHELSPSEGSRKKRKRVGRGPGSGMGGTSTRGNKGHNQRSGGGTRPGFEGGQMPLH) are disordered. Composition is skewed to gly residues over residues 21–31 (RGPGSGMGGTS) and 42–52 (SGGGTRPGFEG).

Belongs to the universal ribosomal protein uL15 family. In terms of assembly, part of the 50S ribosomal subunit.

Its function is as follows. Binds to the 23S rRNA. This chain is Large ribosomal subunit protein uL15, found in Desulforapulum autotrophicum (strain ATCC 43914 / DSM 3382 / VKM B-1955 / HRM2) (Desulfobacterium autotrophicum).